The sequence spans 295 residues: Septu protein PtuB (295 aa).

Component of antiviral defense system Septu type II, composed of PtuA and PtuB. Expression of Septu type II in B.subtilis (strain BEST7003) confers resistance to phages SBSphiC and SpBeta. May be a nuclease. This is Septu protein PtuB from Bacillus mycoides (strain KBAB4) (Bacillus weihenstephanensis).